The sequence spans 149 residues: Large ribosomal subunit protein uL22 (149 aa).

The protein belongs to the universal ribosomal protein uL22 family. Part of the 50S ribosomal subunit.

In terms of biological role, this protein binds specifically to 23S rRNA. It makes multiple contacts with different domains of the 23S rRNA in the assembled 50S subunit and ribosome. The globular domain of the protein is located near the polypeptide exit tunnel on the outside of the subunit, while an extended beta-hairpin is found that lines the wall of the exit tunnel in the center of the 70S ribosome. The polypeptide is Large ribosomal subunit protein uL22 (Picrophilus torridus (strain ATCC 700027 / DSM 9790 / JCM 10055 / NBRC 100828 / KAW 2/3)).